The chain runs to 132 residues: Small ribosomal subunit protein uS11c (132 aa).

This sequence belongs to the universal ribosomal protein uS11 family. In terms of assembly, part of the 30S ribosomal subunit.

The protein resides in the plastid. It localises to the chloroplast. The polypeptide is Small ribosomal subunit protein uS11c (Gnetum parvifolium (Small-leaved jointfir)).